The primary structure comprises 262 residues: Type III pantothenate kinase (262 aa).

9–16 contacts ATP; that stretch reads DAGNSRIK. Substrate contacts are provided by residues tyrosine 96 and 103–106; that span reads GSDR. Catalysis depends on aspartate 105, which acts as the Proton acceptor. Threonine 129 contributes to the ATP binding site. Position 189 (threonine 189) interacts with substrate.

This sequence belongs to the type III pantothenate kinase family. In terms of assembly, homodimer. Requires NH4(+) as cofactor. K(+) serves as cofactor.

The protein resides in the cytoplasm. The catalysed reaction is (R)-pantothenate + ATP = (R)-4'-phosphopantothenate + ADP + H(+). It participates in cofactor biosynthesis; coenzyme A biosynthesis; CoA from (R)-pantothenate: step 1/5. In terms of biological role, catalyzes the phosphorylation of pantothenate (Pan), the first step in CoA biosynthesis. The sequence is that of Type III pantothenate kinase from Burkholderia ambifaria (strain MC40-6).